The chain runs to 62 residues: uncharacterized protein (62 aa).

The chain crosses the membrane as a helical span at residues 17–37 (IVFFLGLVVVLLMMINLYMLI).

Its subcellular location is the membrane. This is an uncharacterized protein from Helicobacter pylori (strain J99 / ATCC 700824) (Campylobacter pylori J99).